A 281-amino-acid chain; its full sequence is MAGTWLLLLLALGCPALPTGVGGTPFPSLAPPIMLLVDGKQQMVVVCLVLDVAPPGLDSPIWFSAGNGSALDAFTYGPSPATDGTWTNLAHLSLPSEELASWEPLVCHTGPGAEGHSRSTQPMHLSGEASTARTCPQEPLRGTPGGALWLGVLRLLLFKLLLFDLLLTCSCLCDPAGPLPSPATTTRLRALGSHRLHPATETGGREATSSPRPQPRDRRWGDTPPGRKPGSPVWGEGSYLSSYPTCPAQAWCSRSALRAPSSSLGAFFAGDLPPPLQAGAA.

The signal sequence occupies residues Met-1–Gly-23. The Extracellular segment spans residues Thr-24 to Gly-146. An intrachain disulfide couples Cys-47 to Cys-107. A glycan (N-linked (GlcNAc...) asparagine) is linked at Asn-67. Residues Ala-147–Leu-167 form a helical membrane-spanning segment. Residues Thr-168–Ala-281 lie on the Cytoplasmic side of the membrane. Residues Leu-196–Val-233 form a disordered region.

Heterodimer with TCRB; disulfide linked. This heterodimer assembles with CD3 proteins into a signaling-competent pre-T-cell receptor complex. Interacts with RHBDD1. Expressed in immature but not mature T-cells. Also found in CD34+ cells from peripheral blood, CD34+ precursors from umbilical cord blood and adult bone marrow.

It is found in the membrane. The protein resides in the cell membrane. Functionally, component of the pre-T-cell receptor complex (composed of PTCRA, TCRB and the CD3 complex) that has a crucial role in early T-cell development, particularly alpha-beta T cell differentiation. In Homo sapiens (Human), this protein is Pre T-cell antigen receptor alpha.